Reading from the N-terminus, the 207-residue chain is Dephospho-CoA kinase (207 aa).

In terms of domain architecture, DPCK spans 4–203 (VIGLTGGIAS…EEGYIEKPNY (200 aa)). Residue 12–17 (ASGKST) coordinates ATP.

It belongs to the CoaE family.

It is found in the cytoplasm. It catalyses the reaction 3'-dephospho-CoA + ATP = ADP + CoA + H(+). It participates in cofactor biosynthesis; coenzyme A biosynthesis; CoA from (R)-pantothenate: step 5/5. Its function is as follows. Catalyzes the phosphorylation of the 3'-hydroxyl group of dephosphocoenzyme A to form coenzyme A. The chain is Dephospho-CoA kinase from Staphylococcus aureus (strain USA300).